The following is a 245-amino-acid chain: 6-carboxyhexanoate--CoA ligase (245 aa).

This sequence belongs to the BioW family. As to quaternary structure, homodimer. It depends on Mg(2+) as a cofactor.

It carries out the reaction heptanedioate + ATP + CoA = 6-carboxyhexanoyl-CoA + AMP + diphosphate. It functions in the pathway metabolic intermediate metabolism; pimeloyl-CoA biosynthesis; pimeloyl-CoA from pimelate: step 1/1. Its function is as follows. Catalyzes the transformation of pimelate into pimeloyl-CoA with concomitant hydrolysis of ATP to AMP. In Sulfurihydrogenibium azorense (strain DSM 15241 / OCM 825 / Az-Fu1), this protein is 6-carboxyhexanoate--CoA ligase.